We begin with the raw amino-acid sequence, 230 residues long: tRNA (cytidine-2'-O-)-methyltransferase TrmJ (230 aa).

Residues 79–81 (TSG), G115, I135, and 142–144 (PIM) each bind S-adenosyl-L-methionine.

It belongs to the class IV-like SAM-binding methyltransferase superfamily. RNA methyltransferase TrmH family. As to quaternary structure, homodimer.

The protein resides in the cytoplasm. It carries out the reaction cytidine(32) in tRNA + S-adenosyl-L-methionine = 2'-O-methylcytidine(32) in tRNA + S-adenosyl-L-homocysteine + H(+). Catalyzes the formation of 2'O-methylated cytidine (Cm32) at position 32 in tRNA. The chain is tRNA (cytidine-2'-O-)-methyltransferase TrmJ from Methanocaldococcus jannaschii (strain ATCC 43067 / DSM 2661 / JAL-1 / JCM 10045 / NBRC 100440) (Methanococcus jannaschii).